A 222-amino-acid polypeptide reads, in one-letter code: Cysteine protease inhibitor 1 (222 aa).

An N-terminal signal peptide occupies residues 1–26 (MKSINILSFLLLSSTLSLVAFARSFT). Residues 27–42 (SENPIVLPTTCHDDDN) constitute a propeptide that is removed on maturation. The short motif at 29-34 (NPIVLP) is the Vacuolar targeting signal element. Cystine bridges form between Cys-84–Cys-136 and Cys-185–Cys-191.

This sequence belongs to the protease inhibitor I3 (leguminous Kunitz-type inhibitor) family. Tubers, leaves.

It localises to the vacuole. Potent inhibitor of cathepsin l (cysteine protease). Does not inhibit trypsin or chymotrypsin (serine proteases). May protect the plant by inhibiting proteases of invading organisms. This is Cysteine protease inhibitor 1 from Solanum tuberosum (Potato).